A 532-amino-acid polypeptide reads, in one-letter code: UDP-glucuronosyltransferase 1A6 (532 aa).

The N-terminal stretch at 1–26 is a signal peptide; sequence MACLLRSFQRISAGVFFLALWGMVVG. Asn294 and Asn346 each carry an N-linked (GlcNAc...) asparagine glycan. The chain crosses the membrane as a helical span at residues 490–506; it reads VIGFLLAVVLTVAFITF.

This sequence belongs to the UDP-glycosyltransferase family. As to quaternary structure, isoform 1 interacts with isoform 3/i2 suggesting that oligomerization is involved in negative regulation of transferase activity by isoform 3. Isoform 1 also interacts with respective i2 isoforms of UGT1A1, UGT1A3, UGT1A4, UGT1A7, UGT1A8, UGT1A9 and UGT1A10. Expressed in skin. Isoforms 1 and 3 are expressed in kidney and liver. Isoform 1 but not isoform 2 is expressed in colon, esophagus and small intestine.

Its subcellular location is the microsome. The protein resides in the endoplasmic reticulum membrane. It catalyses the reaction glucuronate acceptor + UDP-alpha-D-glucuronate = acceptor beta-D-glucuronoside + UDP + H(+). It carries out the reaction (5Z,8Z,11Z,14Z)-eicosatetraenoate + UDP-alpha-D-glucuronate = O-[(5Z),(8Z),(11Z),(14Z)-eicosatetraenoyl]-beta-D-glucuronate + UDP. The enzyme catalyses 15-hydroxy-(5Z,8Z,11Z,13E)-eicosatetraenoate + UDP-alpha-D-glucuronate = 15-O-(beta-D-glucuronosyl)-(5Z,8Z,11Z,14Z)-eicosatetraenoate + UDP + H(+). The catalysed reaction is (E)-ferulate + UDP-alpha-D-glucuronate = (E)-4-O-(beta-D-glucuronosyl)-ferulate + UDP + H(+). It catalyses the reaction (E)-ferulate + UDP-alpha-D-glucuronate = (E)-ferulic acid beta-D-glucuronate ester + UDP. UDP-glucuronosyltransferase (UGT) that catalyzes phase II biotransformation reactions in which lipophilic substrates are conjugated with glucuronic acid to facilitate their inactivation and excretion from the body. Essential for the elimination and detoxification of drugs, xenobiotics and endogenous compounds. Involved in the glucuronidation of arachidonic acid (AA) and AA-derived eicosanoids including 15-HETE and 20-HETE. Conjugates small planar phenolic molecules such as 4-nitrophenol, 1-naphthol, and 4-methylumbelliferone. The bulky phenol 4-hydroxybiphenyl, androgens and estrogens are not substrates. 2-hydroxybiphenyl is an excellent substrate. Involved in the glucuronidation of the phytochemical ferulic acid at the phenolic or the carboxylic acid group. In terms of biological role, isoform 3 lacks transferase activity but acts as a negative regulator of isoform 1. The polypeptide is UDP-glucuronosyltransferase 1A6 (Homo sapiens (Human)).